The primary structure comprises 506 residues: NAD(P)H-quinone oxidoreductase subunit 2 (506 aa).

A run of 13 helical transmembrane segments spans residues A14–A34, W42–W62, L79–W99, P108–G128, L132–Y152, L167–L187, F206–V226, P240–I260, L276–Q296, M302–T322, V330–F350, L374–G394, and L409–I429.

The protein belongs to the complex I subunit 2 family. NDH-1 can be composed of about 15 different subunits; different subcomplexes with different compositions have been identified which probably have different functions.

It localises to the cellular thylakoid membrane. It carries out the reaction a plastoquinone + NADH + (n+1) H(+)(in) = a plastoquinol + NAD(+) + n H(+)(out). The enzyme catalyses a plastoquinone + NADPH + (n+1) H(+)(in) = a plastoquinol + NADP(+) + n H(+)(out). NDH-1 shuttles electrons from an unknown electron donor, via FMN and iron-sulfur (Fe-S) centers, to quinones in the respiratory and/or the photosynthetic chain. The immediate electron acceptor for the enzyme in this species is believed to be plastoquinone. Couples the redox reaction to proton translocation, and thus conserves the redox energy in a proton gradient. Cyanobacterial NDH-1 also plays a role in inorganic carbon-concentration. This chain is NAD(P)H-quinone oxidoreductase subunit 2, found in Prochlorococcus marinus (strain AS9601).